Consider the following 258-residue polypeptide: MVWCHYILLVLTFFLFTTFFTAACPAIFTWLNSLFRLSNDSPHVVHTSIAEVGDIEDGRVDKDGVLFVDLEFFLGCLPFFFFALVDQSSSSSVCKPLSPSDAKRSSNSLLRLSLVSSNDSDSSVSVSTFAFFFFFLFFLFFVFTCTFSSELTSSTSISISMLRLSSSLSSSEDDSASFLSISASSACNACRSISSFSLTLSSAESNFSRSERLSNPSVMFSSSISFRISSIFFLCSLVFMWFFNCFSDLNVLLQIKHS.

The first 23 residues, 1 to 23 (MVWCHYILLVLTFFLFTTFFTAA), serve as a signal peptide directing secretion. Over 24-64 (CPAIFTWLNSLFRLSNDSPHVVHTSIAEVGDIEDGRVDKDG) the chain is Cytoplasmic. Residues 65 to 85 (VLFVDLEFFLGCLPFFFFALV) traverse the membrane as a helical segment. The Extracellular segment spans residues 86–123 (DQSSSSSVCKPLSPSDAKRSSNSLLRLSLVSSNDSDSS). N118 carries an N-linked (GlcNAc...) asparagine glycan. Residues 124 to 144 (VSVSTFAFFFFFLFFLFFVFT) form a helical membrane-spanning segment. Over 145 to 230 (CTFSSELTSS…SSSISFRISS (86 aa)) the chain is Cytoplasmic. Residues 231 to 251 (IFFLCSLVFMWFFNCFSDLNV) form a helical membrane-spanning segment. Topologically, residues 252–258 (LLQIKHS) are extracellular.

It localises to the membrane. This is an uncharacterized protein from Saccharomyces cerevisiae (strain ATCC 204508 / S288c) (Baker's yeast).